Reading from the N-terminus, the 364-residue chain is UDP-N-acetylglucosamine--N-acetylmuramyl-(pentapeptide) pyrophosphoryl-undecaprenol N-acetylglucosamine transferase (364 aa).

UDP-N-acetyl-alpha-D-glucosamine contacts are provided by residues 10 to 12, N123, S198, I251, and Q296; that span reads TGG.

Belongs to the glycosyltransferase 28 family. MurG subfamily.

The protein resides in the cell membrane. The enzyme catalyses di-trans,octa-cis-undecaprenyl diphospho-N-acetyl-alpha-D-muramoyl-L-alanyl-D-glutamyl-meso-2,6-diaminopimeloyl-D-alanyl-D-alanine + UDP-N-acetyl-alpha-D-glucosamine = di-trans,octa-cis-undecaprenyl diphospho-[N-acetyl-alpha-D-glucosaminyl-(1-&gt;4)]-N-acetyl-alpha-D-muramoyl-L-alanyl-D-glutamyl-meso-2,6-diaminopimeloyl-D-alanyl-D-alanine + UDP + H(+). It participates in cell wall biogenesis; peptidoglycan biosynthesis. Cell wall formation. Catalyzes the transfer of a GlcNAc subunit on undecaprenyl-pyrophosphoryl-MurNAc-pentapeptide (lipid intermediate I) to form undecaprenyl-pyrophosphoryl-MurNAc-(pentapeptide)GlcNAc (lipid intermediate II). This Exiguobacterium sibiricum (strain DSM 17290 / CCUG 55495 / CIP 109462 / JCM 13490 / 255-15) protein is UDP-N-acetylglucosamine--N-acetylmuramyl-(pentapeptide) pyrophosphoryl-undecaprenol N-acetylglucosamine transferase.